The primary structure comprises 531 residues: Protein MGF 505-1R (531 aa).

It belongs to the asfivirus MGF 505 family.

In terms of biological role, plays a role in virus cell tropism, and may be required for efficient virus replication in macrophages. In Ornithodoros (relapsing fever ticks), this protein is Protein MGF 505-1R.